The sequence spans 75 residues: Brevinin-2HS2A (75 aa).

A signal peptide spans 1-22 (MFTLKKPLLLLFFLGTISLSLC). Residues 23–40 (QEERDADEEEGEMIEEEV) constitute a propeptide that is removed on maturation. An intrachain disulfide couples C69 to C75.

It belongs to the frog skin active peptide (FSAP) family. Brevinin subfamily. Expressed by the skin glands.

It is found in the secreted. In terms of biological role, has antimicrobial activity against some Gram-positive bacteria and fungi but has no activity against a range of Gram-negative bacteria except P.faecalis. Has antimicrobial activity against the Gram-positive bacteria S.aureus ATCC 25923 (MIC=19 uM), B.licheniformis X39 (MIC=37.5 uM) and R.rhodochrous X15 (MIC=9.5 uM), is virtually inactive against E.faecium 091299 (MIC=150 uM) and S.carnosus KHS (MIC=150 uM) and inactive against E.faecalis 981. Active against the Gram-negative bacterium P.faecalis X29 (MIC=9.5 uM) and is inactive against E.coli, P.aeruginosa and S.typhi. Active against C.albicans ATCC 2002 (MIC=19 uM) and is also active against the slime mold 090223 (MIC=37.5 uM). Has extremely low hemolytic activity against human erythrocytes (LC(50)=300 uM). The polypeptide is Brevinin-2HS2A (Odorrana hainanensis (Odor frog)).